Consider the following 1257-residue polypeptide: ATP-binding cassette sub-family B member 5 (1257 aa).

Residues 1–24 are disordered; sequence MENSERAEEMQENYQRNGTAEEQP. Asn-17 carries N-linked (GlcNAc...) asparagine glycosylation. The helical transmembrane segment at 49–69 threads the bilayer; the sequence is ILGILASLVNGACLPLMPLVL. The region spanning 49-350 is the ABC transmembrane type-1 1 domain; the sequence is ILGILASLVN…AAVPHFETFA (302 aa). Residues Asn-85 and Asn-91 are each glycosylated (N-linked (GlcNAc...) asparagine). Transmembrane regions (helical) follow at residues 110–130, 181–201, 203–223, 294–314, and 322–342; these read YVGI…LWII, KIAL…VGLV, GWKL…SAAA, VYFF…SLIL, and IGTV…IGAA. 3 N-linked (GlcNAc...) asparagine glycosylation sites follow: Asn-371, Asn-390, and Asn-423. Residues 386 to 622 form the ABC transporter 1 domain; the sequence is VEFKNVSFNY…RGLYYSLVMS (237 aa). 421-428 provides a ligand contact to ATP; the sequence is GLNGSGKS. The next 2 membrane-spanning stretches (helical) occupy residues 693–713 and 737–757; these read VLGT…SIIF and MIFV…GLFY. In terms of domain architecture, ABC transmembrane type-1 2 spans 693–980; sequence VLGTLASVLN…TLVLAPEYSK (288 aa). N-linked (GlcNAc...) asparagine glycans are attached at residues Asn-789 and Asn-819. A helical transmembrane segment spans residues 827 to 847; sequence VIISFIYGWEMTFLILSIAPV. N-linked (GlcNAc...) asparagine glycosylation occurs at Asn-910. Transmembrane regions (helical) follow at residues 917–937 and 954–974; these read IIGS…AAGF and MFIV…TLVL. The 239-residue stretch at 1015–1253 folds into the ABC transporter 2 domain; the sequence is LEFREVSFFY…RDIYFKLVNA (239 aa). Position 1050-1057 (1050-1057) interacts with ATP; sequence GSSGCGKS. N-linked (GlcNAc...) asparagine glycosylation is found at Asn-1104 and Asn-1188.

This sequence belongs to the ABC transporter superfamily. ABCB family. Multidrug resistance exporter (TC 3.A.1.201) subfamily. As to expression, expressed by CD133-expressing progenitor cells among epidermal melanocytes (at protein level). Widely expressed with specific expression in pigment cells. Highly expressed in several malignant tissues: highly expressed in clinical melanomas, with low expression in normal skin. In melanoma, marks malignant melanoma-initiating cells (MMIC), in which clinical virulence resides as a consequence of unlimited self-renewal capacity, resulting in inexorable tumor progression and metastasis. Also highly expressed in a number of leukemia cells. Expressed in basal limbal epithelium.

Its subcellular location is the cell membrane. The enzyme catalyses daunorubicin(in) + ATP + H2O = daunorubicin(out) + ADP + phosphate + H(+). Energy-dependent efflux transporter responsible for decreased drug accumulation in multidrug-resistant cells. Specifically present in limbal stem cells, where it plays a key role in corneal development and repair. This chain is ATP-binding cassette sub-family B member 5, found in Homo sapiens (Human).